The primary structure comprises 289 residues: Phosphatidylserine decarboxylase proenzyme (289 aa).

Residues Asp89, His146, and Ser252 each act as charge relay system; for autoendoproteolytic cleavage activity in the active site. The Schiff-base intermediate with substrate; via pyruvic acid; for decarboxylase activity role is filled by Ser252. Residue Ser252 is modified to Pyruvic acid (Ser); by autocatalysis.

This sequence belongs to the phosphatidylserine decarboxylase family. PSD-B subfamily. Prokaryotic type I sub-subfamily. As to quaternary structure, heterodimer of a large membrane-associated beta subunit and a small pyruvoyl-containing alpha subunit. Requires pyruvate as cofactor. In terms of processing, is synthesized initially as an inactive proenzyme. Formation of the active enzyme involves a self-maturation process in which the active site pyruvoyl group is generated from an internal serine residue via an autocatalytic post-translational modification. Two non-identical subunits are generated from the proenzyme in this reaction, and the pyruvate is formed at the N-terminus of the alpha chain, which is derived from the carboxyl end of the proenzyme. The autoendoproteolytic cleavage occurs by a canonical serine protease mechanism, in which the side chain hydroxyl group of the serine supplies its oxygen atom to form the C-terminus of the beta chain, while the remainder of the serine residue undergoes an oxidative deamination to produce ammonia and the pyruvoyl prosthetic group on the alpha chain. During this reaction, the Ser that is part of the protease active site of the proenzyme becomes the pyruvoyl prosthetic group, which constitutes an essential element of the active site of the mature decarboxylase.

Its subcellular location is the cell membrane. The enzyme catalyses a 1,2-diacyl-sn-glycero-3-phospho-L-serine + H(+) = a 1,2-diacyl-sn-glycero-3-phosphoethanolamine + CO2. Its pathway is phospholipid metabolism; phosphatidylethanolamine biosynthesis; phosphatidylethanolamine from CDP-diacylglycerol: step 2/2. Functionally, catalyzes the formation of phosphatidylethanolamine (PtdEtn) from phosphatidylserine (PtdSer). In Nitrosospira multiformis (strain ATCC 25196 / NCIMB 11849 / C 71), this protein is Phosphatidylserine decarboxylase proenzyme.